The chain runs to 307 residues: Putative serine/threonine-protein phosphatase C22H10.04 (307 aa).

Mn(2+) contacts are provided by Asp-51, His-53, Asp-79, and Asn-111. The active-site Proton donor is the His-112. His-161 and His-236 together coordinate Mn(2+).

It belongs to the PPP phosphatase family. PP-X subfamily. Mn(2+) is required as a cofactor.

The enzyme catalyses O-phospho-L-seryl-[protein] + H2O = L-seryl-[protein] + phosphate. The catalysed reaction is O-phospho-L-threonyl-[protein] + H2O = L-threonyl-[protein] + phosphate. The protein is Putative serine/threonine-protein phosphatase C22H10.04 of Schizosaccharomyces pombe (strain 972 / ATCC 24843) (Fission yeast).